A 1173-amino-acid polypeptide reads, in one-letter code: MPASFVHLRLHTEYSLVDGLVRIKPLVKALTGMGMPAVAVTDQNNMCSLVKFYKNAMGAGIKPICGADLWLSNKDPDGPLSRISLLVMNAQGYRNLTELISRGFIDGQRNGMVIIEREWVAEANEGLIMLSAAKEGEIGMAMIGGNPAEAEALAREWMAVFPDRFYLEIQRTNRPNDEEQLHGAVALADKLGAPLVATNDVRFIKQEDFAAHETRVCIGEGRALDDPRRSKNYSDQQYLKSAEEMAELFSDLPDAIENTVEIAKRCNIDVKLGKHFLPDYPIPDGMTIDEYFRKVSFDGLEERLSVLLPKDTTEDYEAKRQVYVDRLNFELDIIIQMGFPGYFLIVMDFIQWAKNNGVPVGPGRGSGAGSLVAYVQKITDLDPLEYDLLFERFLNPERVSMPDFDVDFCMDGRDRVIDYVAEKYGRNAVSQIITFGSMAAKAVVRDVARAQGKSFGLADRLSKMVPFEVGMTLEKAYEQEEILRDFIKVDEEAAEIWEMARKLEGVVRNVGKHAGGVVIAPTKLTDFSPIYCDEAGDGLVTQFDKDDVEAAGLVKFDFLGLRTLTIIDWALKTINRDRAKVNEPPLDIAFIPLDDKPTYQLLQKAETTAVFQLESRGMKELIKKLKLDCLEDLIALVALFRPGPLQSGMVDDFINRKHGRAELAYPHPDYQYEGLQPVLAPTYGIILYQEQVMQIAQVMAGYTLGGADMLRRAMGKKKPEEMAKQRGGFIEGCASNNIDADLAGNIFDLVEKFAGYGFNKSHSAAYGLVSYQTAWLKAHYPAPFMAAVLSADMHNTDKVVTLIEEVRTMKLRLDAPDVNTSEFKFTVNDEGRIVYGLGAIKGVGEGPVEAITEARQAGPFKDLFDFCARVDLKRINKRTLDGLIRSGALDRLGPYFHDEQKAYQANIDRNRAVLLAAMEEAIKSAEQTARTRDSGHADLFGGLFVEEDADVYAIHRKAKELTLKERLKGEKDTLGLYLTGHPIDEYEGEIRRFARQRIIDLKPARDTQTVAGMIIALRVMKNKKGDKMGFITLDDRSGRIEASLFADAFHSAQSLLQTDAMVVVEGEVSNDDFSGGLRLRVKRVMSMEDARTNLAESLRLKLQTQDLKGDQLRWLGDLLKRHRGACPITMEYTSPDAKTLLQFGETWRIDPADALIQALRDQFGRDNVFLQYR.

This sequence belongs to the DNA polymerase type-C family. DnaE subfamily. DNA polymerase III contains a core (composed of alpha, epsilon and theta chains) that associates with a tau subunit. This core dimerizes to form the PolIII' complex. PolIII' associates with the gamma complex (composed of gamma, delta, delta', psi and chi chains) and with the beta chain to form the complete DNA polymerase III complex.

It localises to the cytoplasm. The enzyme catalyses DNA(n) + a 2'-deoxyribonucleoside 5'-triphosphate = DNA(n+1) + diphosphate. Functionally, DNA polymerase III is a complex, multichain enzyme responsible for most of the replicative synthesis in bacteria. This DNA polymerase also exhibits 3' to 5' exonuclease activity. The alpha chain is the DNA polymerase. This is DNA polymerase III subunit alpha (dnaE) from Pseudomonas fluorescens.